The following is a 312-amino-acid chain: Phosphoribosylaminoimidazole-succinocarboxamide synthase (312 aa).

Belongs to the SAICAR synthetase family.

The catalysed reaction is 5-amino-1-(5-phospho-D-ribosyl)imidazole-4-carboxylate + L-aspartate + ATP = (2S)-2-[5-amino-1-(5-phospho-beta-D-ribosyl)imidazole-4-carboxamido]succinate + ADP + phosphate + 2 H(+). It participates in purine metabolism; IMP biosynthesis via de novo pathway; 5-amino-1-(5-phospho-D-ribosyl)imidazole-4-carboxamide from 5-amino-1-(5-phospho-D-ribosyl)imidazole-4-carboxylate: step 1/2. This is Phosphoribosylaminoimidazole-succinocarboxamide synthase from Legionella pneumophila (strain Lens).